The chain runs to 197 residues: Phospholipid hydroperoxide glutathione peroxidase (197 aa).

Residue S40 is modified to Phosphoserine. Residue U73 is part of the active site. A non-standard amino acid (selenocysteine) is located at residue U73. At V78 the chain carries Phosphoserine.

This sequence belongs to the glutathione peroxidase family. Monomer. Has a tendency to form higher mass oligomers. Interacts with FUNDC1; this interaction promotes GPX4 recruitment into mitochondria through TOM/TIM complex where it is degraded by mitophagy. Present primarily in testis. Expressed in flagella of epididymal sperm. Isoform Cytoplasmic: Highly expressed in testis. Present in spermatogonia, spermatocyte and spermatid (at protein level).

It localises to the nucleus. It is found in the nucleolus. The protein localises to the mitochondrion. The protein resides in the cytoplasm. It catalyses the reaction a hydroperoxy polyunsaturated fatty acid + 2 glutathione = a hydroxy polyunsaturated fatty acid + glutathione disulfide + H2O. It carries out the reaction 2 glutathione + H2O2 = glutathione disulfide + 2 H2O. The catalysed reaction is tert-butyl hydroperoxide + 2 glutathione = tert-butanol + glutathione disulfide + H2O. The enzyme catalyses cumene hydroperoxide + 2 glutathione = 2-phenylpropan-2-ol + glutathione disulfide + H2O. It catalyses the reaction (9S)-hydroperoxy-(10E,12Z)-octadecadienoate + 2 glutathione = (9S)-hydroxy-(10E,12Z)-octadecadienoate + glutathione disulfide + H2O. It carries out the reaction (13S)-hydroperoxy-(9Z,11E)-octadecadienoate + 2 glutathione = (13S)-hydroxy-(9Z,11E)-octadecadienoate + glutathione disulfide + H2O. The catalysed reaction is (5S)-hydroperoxy-(6E,8Z,11Z,14Z)-eicosatetraenoate + 2 glutathione = (5S)-hydroxy-(6E,8Z,11Z,14Z)-eicosatetraenoate + glutathione disulfide + H2O. The enzyme catalyses (12R)-hydroperoxy-(5Z,8Z,10E,14Z)-eicosatetraenoate + 2 glutathione = (12R)-hydroxy-(5Z,8Z,10E,14Z)-eicosatetraenoate + glutathione disulfide + H2O. It catalyses the reaction (12S)-hydroperoxy-(5Z,8Z,10E,14Z)-eicosatetraenoate + 2 glutathione = (12S)-hydroxy-(5Z,8Z,10E,14Z)-eicosatetraenoate + glutathione disulfide + H2O. It carries out the reaction (15S)-hydroperoxy-(5Z,8Z,11Z,13E)-eicosatetraenoate + 2 glutathione = (15S)-hydroxy-(5Z,8Z,11Z,13E)-eicosatetraenoate + glutathione disulfide + H2O. The catalysed reaction is (5S)-hydroperoxy-(6E,8Z,11Z,14Z,17Z)-eicosapentaenoate + 2 glutathione = (5S)-hydroxy-(6E,8Z,11Z,14Z,17Z)-eicosapentaenoate + glutathione disulfide + H2O. The enzyme catalyses (12S)-hydroperoxy-(5Z,8Z,10E,14Z,17Z)-eicosapentaenoate + 2 glutathione = (12S)-hydroxy-(5Z,8Z,10E,14Z,17Z)-eicosapentaenoate + glutathione disulfide + H2O. It catalyses the reaction (15S)-hydroperoxy-(5Z,8Z,11Z,13E,17Z)-eicosapentaenoate + 2 glutathione = (15S)-hydroxy-(5Z,8Z,11Z,13E,17Z)-eicosapentaenoate + glutathione disulfide + H2O. It carries out the reaction (15S)-hydroperoxy-(11Z,13E)-eicosadienoate + 2 glutathione = (15S)-hydroxy-(11Z,13E)-eicosadienoate + glutathione disulfide + H2O. The catalysed reaction is (17S)-hydroperoxy-(4Z,7Z,10Z,13Z,15E,19Z)-docosahexaenoate + 2 glutathione = (17S)-hydroxy-(4Z,7Z,10Z,13Z,15E,19Z)-docosahexaenoate + glutathione disulfide + H2O. The enzyme catalyses a hydroperoxy-1,2-diacyl-glycero-3-phosphocholine + 2 glutathione = a hydroxy-1,2-diacyl-glycero-3-phosphocholine + glutathione disulfide + H2O. In terms of biological role, essential antioxidant peroxidase that directly reduces phospholipid hydroperoxide even if they are incorporated in membranes and lipoproteins. Can also reduce fatty acid hydroperoxide, cholesterol hydroperoxide and thymine hydroperoxide. Plays a key role in protecting cells from oxidative damage by preventing membrane lipid peroxidation. Required to prevent cells from ferroptosis, a non-apoptotic cell death resulting from an iron-dependent accumulation of lipid reactive oxygen species. The presence of selenocysteine (Sec) versus Cys at the active site is essential for life: it provides resistance to overoxidation and prevents cells against ferroptosis. The presence of Sec at the active site is also essential for the survival of a specific type of parvalbumin-positive interneurons, thereby preventing against fatal epileptic seizures. May be required to protect cells from the toxicity of ingested lipid hydroperoxides. Required for normal sperm development and male fertility. Essential for maturation and survival of photoreceptor cells. Plays a role in a primary T-cell response to viral and parasitic infection by protecting T-cells from ferroptosis and by supporting T-cell expansion. Plays a role of glutathione peroxidase in platelets in the arachidonic acid metabolism. Reduces hydroperoxy ester lipids formed by a 15-lipoxygenase that may play a role as down-regulator of the cellular 15-lipoxygenase pathway. Can also reduce small soluble hydroperoxides such as H2O2, cumene hydroperoxide and tert-butyl hydroperoxide. Its function is as follows. Specifically able to suppress the production of leukotriene and prostaglandin in response to several stimuli by reducing fatty acid hydroperoxide. Specifically required to prevent mitochondrial cell death by mediating reduction of cardiolipin hydroperoxide. Also required for normal sperm development and male fertility. Functionally, required for male fertility by stabilizing the condensed chromatin in sperm nuclei. The sequence is that of Phospholipid hydroperoxide glutathione peroxidase from Rattus norvegicus (Rat).